The primary structure comprises 86 residues: Small ribosomal subunit protein bS18 (86 aa).

The protein belongs to the bacterial ribosomal protein bS18 family. As to quaternary structure, part of the 30S ribosomal subunit. Forms a tight heterodimer with protein bS6.

Functionally, binds as a heterodimer with protein bS6 to the central domain of the 16S rRNA, where it helps stabilize the platform of the 30S subunit. In Campylobacter jejuni subsp. jejuni serotype O:6 (strain 81116 / NCTC 11828), this protein is Small ribosomal subunit protein bS18.